Here is an 85-residue protein sequence, read N- to C-terminus: MVVVRLARGGAKKRPFYNMVVADSRRHRDGKFIERVGFYNPRATGGEESLRIQMDRLNHWQSQGAQLSSTVSRLVKQFGRQQKPA.

Belongs to the bacterial ribosomal protein bS16 family.

The protein is Small ribosomal subunit protein bS16 of Nitrosomonas eutropha (strain DSM 101675 / C91 / Nm57).